A 338-amino-acid polypeptide reads, in one-letter code: Phenylalanine--tRNA ligase alpha subunit (338 aa).

Glu253 is a binding site for Mg(2+).

It belongs to the class-II aminoacyl-tRNA synthetase family. Phe-tRNA synthetase alpha subunit type 1 subfamily. As to quaternary structure, tetramer of two alpha and two beta subunits. It depends on Mg(2+) as a cofactor.

It localises to the cytoplasm. The catalysed reaction is tRNA(Phe) + L-phenylalanine + ATP = L-phenylalanyl-tRNA(Phe) + AMP + diphosphate + H(+). This is Phenylalanine--tRNA ligase alpha subunit from Citrifermentans bemidjiense (strain ATCC BAA-1014 / DSM 16622 / JCM 12645 / Bem) (Geobacter bemidjiensis).